A 360-amino-acid polypeptide reads, in one-letter code: MAQLSLQHIQKIYDNQVHVVKDFNLEIADKEFIVFVGPSGCGKSTTLRMIAGLEEISGGDLLIDGKRMNDVPAKARNIAMVFQNYALYPHMTVYDNMAFGLKMQKIAREVIDERVNWAAQILGLREYLKRKPGALSGGQRQRVALGRAIVREAGVFLMDEPLSNLDAKLRVQMRAEISKLHQKLNTTMIYVTHDQTEAMTMATRIVIMKDGIVQQVGAPKTVYNQPANMFVAGFIGSPAMNFIRGTIDGDKFVTETLKLTIPEEKLAVLKTQESLHKPIVMGIRPEDIHPDAQEENNISAKISVAELTGAEFMLYTTVGGHELVVRAGALNDYHAGENITIHFDMTKCHFFDAETEIAIC.

One can recognise an ABC transporter domain in the interval leucine 4 to isoleucine 235. Glycine 37 to serine 44 lines the ATP pocket.

Belongs to the ABC transporter superfamily.

This is an uncharacterized protein from Escherichia coli O6:K15:H31 (strain 536 / UPEC).